Here is an 80-residue protein sequence, read N- to C-terminus: Lantibiotic Flvalpha.a (80 aa).

The propeptide at 1-38 is cleaved by FlvT; it reads MNKNPIYRSEEEAKDIACGNVAAELDENSQALDAINGA. Residues Thr43 and Thr47 each carry the 2,3-didehydrobutyrine; by FlvM1 modification. Positions 52-55 form a cross-link, beta-methyllanthionine (Thr-Cys); by FlvM1; it reads TVGC. The lanthionine (Ser-Cys); by FlvM1 cross-link spans 58–68; that stretch reads SYGLGNGGYCC. Cross-links (beta-methyllanthionine (Thr-Cys); by FlvM1) lie at residues 69 to 74 and 71 to 78; these read TYTVEC and TVECSKTC.

The lanthionine formed by Ser-58 and Cys-68 forms a putative lipid II binding motif. Post-translationally, maturation of FlvA1 peptides involves the enzymatic conversion of Thr, and Ser into dehydrated AA and the formation of thioether bonds with cysteines. Modifications are processed by the flavecin synthetase FlvM1. This is followed by membrane translocation and cleavage of the modified precursor. In terms of processing, contains DL-lanthionine and DL-beta-methyllanthionine, when coepressed in E.coli with the flavecin synthetase FlvM1.

Its subcellular location is the secreted. Lanthionine-containing peptide antibiotic (lantibiotic) only active on Gram-positive bacteria in synergy with Flvbeta peptides, which are encoded by the same operon than Flvalpha.a. Shows antibacterial activity in synergy with Flvbeta.b, Flvbeta.c, Flvbeta.e and Flvbeta.g. Does not show antibacterial activity when tested with Flvbeta.a, Flvbeta.d, Flvbeta.f and Flvbeta.h. The bactericidal activity of lantibiotics is based on depolarization of energized bacterial cytoplasmic membranes, initiated by the formation of aqueous transmembrane pores. The chain is Lantibiotic Flvalpha.a from Ruminococcus flavefaciens.